Consider the following 142-residue polypeptide: FAD synthase (142 aa).

ATP-binding positions include valine 9–phenylalanine 10, histidine 14–histidine 17, aspartate 93, and tyrosine 120.

Belongs to the archaeal FAD synthase family. As to quaternary structure, homodimer. A divalent metal cation is required as a cofactor.

The catalysed reaction is FMN + ATP + H(+) = FAD + diphosphate. Its pathway is cofactor biosynthesis; FAD biosynthesis; FAD from FMN: step 1/1. Its function is as follows. Catalyzes the transfer of the AMP portion of ATP to flavin mononucleotide (FMN) to produce flavin adenine dinucleotide (FAD) coenzyme. This is FAD synthase from Thermoplasma acidophilum (strain ATCC 25905 / DSM 1728 / JCM 9062 / NBRC 15155 / AMRC-C165).